The primary structure comprises 153 residues: Prophage Rz endopeptidase RzpD (153 aa).

Necessary for host cell lysis. It is believed to code for an endopeptidase that cleaves the amino-carboxyl cross-link between the diaminopimelic acid and D-alanine residues in the murein component of the bacterial cell wall. This is Prophage Rz endopeptidase RzpD (rzpD) from Escherichia coli (strain K12).